Here is a 151-residue protein sequence, read N- to C-terminus: ALK and LTK ligand 2 (151 aa).

An N-terminal signal peptide occupies residues 1 to 25; it reads MRVSGRPMLLALLLLLSTVGDRGRA. 2 disulfides stabilise this stretch: C112–C148 and C126–C135.

The protein belongs to the ALKAL family. In terms of assembly, homodimer.

The protein resides in the secreted. The protein localises to the cell membrane. Functionally, cytokine that acts as a physiological ligand for receptor tyrosine kinases LTK and ALK, leading to their activation. Cytokine-binding is sufficient to activate LTK. In contrast, ALKAL2-driven activation of ALK is coupled with heparin-binding to ALK. Stimulation of ALK signaling is involved in neural development and regulation of energy expenditure. This chain is ALK and LTK ligand 2, found in Mus musculus (Mouse).